Here is a 323-residue protein sequence, read N- to C-terminus: o-succinylbenzoate synthase (323 aa).

The active-site Proton donor is the Lys134. Positions 162, 191, and 214 each coordinate Mg(2+). The active-site Proton acceptor is Lys236.

It belongs to the mandelate racemase/muconate lactonizing enzyme family. MenC type 1 subfamily. A divalent metal cation serves as cofactor.

It catalyses the reaction (1R,6R)-6-hydroxy-2-succinyl-cyclohexa-2,4-diene-1-carboxylate = 2-succinylbenzoate + H2O. It functions in the pathway quinol/quinone metabolism; 1,4-dihydroxy-2-naphthoate biosynthesis; 1,4-dihydroxy-2-naphthoate from chorismate: step 4/7. Its pathway is quinol/quinone metabolism; menaquinone biosynthesis. Functionally, converts 2-succinyl-6-hydroxy-2,4-cyclohexadiene-1-carboxylate (SHCHC) to 2-succinylbenzoate (OSB). The sequence is that of o-succinylbenzoate synthase from Yersinia enterocolitica serotype O:8 / biotype 1B (strain NCTC 13174 / 8081).